We begin with the raw amino-acid sequence, 334 residues long: E3 ubiquitin-protein ligase ATL4 (334 aa).

A disordered region spans residues 1-20 (MESLINPSHGGGNYDSHSSS). A helical transmembrane segment spans residues 28–48 (VLVIILILLMTLLISVSICFL). Residues 117–159 (CAVCLSKFEPEDQLRLLPLCCHAFHADCIDIWLVSNQTCPLCR) form an RING-type; atypical zinc finger.

It belongs to the RING-type zinc finger family. ATL subfamily.

It is found in the membrane. It catalyses the reaction S-ubiquitinyl-[E2 ubiquitin-conjugating enzyme]-L-cysteine + [acceptor protein]-L-lysine = [E2 ubiquitin-conjugating enzyme]-L-cysteine + N(6)-ubiquitinyl-[acceptor protein]-L-lysine.. Its pathway is protein modification; protein ubiquitination. Functionally, E3 ubiquitin-protein ligase able to catalyze polyubiquitination with ubiquitin-conjugating enzyme E2 UBC8 in vitro. This Arabidopsis thaliana (Mouse-ear cress) protein is E3 ubiquitin-protein ligase ATL4.